Consider the following 1032-residue polypeptide: Leucine-rich repeat and coiled-coil domain-containing protein 1 (1032 aa).

LRR repeat units lie at residues 44–65 (TLHA…DHIW), 66–87 (NLQH…NTLT), 88–109 (KLCT…EELI), 110–131 (NLTR…IPLH), and 136–157 (KLRY…LQCM). The region spanning 175–218 (NPVCRLPGYRAVILQTLPQLRILDCKNIFGEPVNLTEINSSQLQ) is the LRRCT domain. Residues 316-345 (DNVLEKDPRPKRDTDITSESDYGNRKECNR) are disordered. The segment covering 318–330 (VLEKDPRPKRDTD) has biased composition (basic and acidic residues). Residues 421–647 (NTYQSLVEQL…DLENEFRIAL (227 aa)) adopt a coiled-coil conformation.

Belongs to the LRRCC1 family.

The protein resides in the cytoplasm. It is found in the cytoskeleton. It localises to the microtubule organizing center. The protein localises to the centrosome. Its subcellular location is the centriole. Its function is as follows. Required for the organization of the mitotic spindle. Maintains the structural integrity of centrosomes during mitosis. The sequence is that of Leucine-rich repeat and coiled-coil domain-containing protein 1 (LRRCC1) from Homo sapiens (Human).